Reading from the N-terminus, the 219-residue chain is MSRISKAEMSKLLSVYFIMGSNNCTKDPLQVLREALEGFITIFQFREKGEGALTGEERICFAKELQAICKEYGVPFIVNDDVELALELDADGVHVGQDDEGITSVREKMGDKIVGVSTHTIEEARWVIENGADYLGVGPIFPTSTKKDTKAVQGTKGLAHFREQGITIPIVGIGGISIENTASVIEAGADGVSVISAISLAESAYESTKKLVEEVSRSL.

4-amino-2-methyl-5-(diphosphooxymethyl)pyrimidine is bound by residues 44 to 48 and N79; that span reads QFREK. 2 residues coordinate Mg(2+): D80 and D99. S117 contacts 4-amino-2-methyl-5-(diphosphooxymethyl)pyrimidine. 143–145 contacts 2-[(2R,5Z)-2-carboxy-4-methylthiazol-5(2H)-ylidene]ethyl phosphate; it reads TST. Position 146 (K146) interacts with 4-amino-2-methyl-5-(diphosphooxymethyl)pyrimidine. 2-[(2R,5Z)-2-carboxy-4-methylthiazol-5(2H)-ylidene]ethyl phosphate contacts are provided by residues G175 and 195–196; that span reads IS.

The protein belongs to the thiamine-phosphate synthase family. It depends on Mg(2+) as a cofactor.

The enzyme catalyses 2-[(2R,5Z)-2-carboxy-4-methylthiazol-5(2H)-ylidene]ethyl phosphate + 4-amino-2-methyl-5-(diphosphooxymethyl)pyrimidine + 2 H(+) = thiamine phosphate + CO2 + diphosphate. The catalysed reaction is 2-(2-carboxy-4-methylthiazol-5-yl)ethyl phosphate + 4-amino-2-methyl-5-(diphosphooxymethyl)pyrimidine + 2 H(+) = thiamine phosphate + CO2 + diphosphate. It catalyses the reaction 4-methyl-5-(2-phosphooxyethyl)-thiazole + 4-amino-2-methyl-5-(diphosphooxymethyl)pyrimidine + H(+) = thiamine phosphate + diphosphate. Its pathway is cofactor biosynthesis; thiamine diphosphate biosynthesis; thiamine phosphate from 4-amino-2-methyl-5-diphosphomethylpyrimidine and 4-methyl-5-(2-phosphoethyl)-thiazole: step 1/1. Functionally, condenses 4-methyl-5-(beta-hydroxyethyl)thiazole monophosphate (THZ-P) and 2-methyl-4-amino-5-hydroxymethyl pyrimidine pyrophosphate (HMP-PP) to form thiamine monophosphate (TMP). The sequence is that of Thiamine-phosphate synthase from Bacillus anthracis (strain A0248).